The chain runs to 102 residues: ATP-dependent Clp protease adapter protein ClpS (102 aa).

This sequence belongs to the ClpS family. As to quaternary structure, binds to the N-terminal domain of the chaperone ClpA.

Its function is as follows. Involved in the modulation of the specificity of the ClpAP-mediated ATP-dependent protein degradation. This is ATP-dependent Clp protease adapter protein ClpS from Shewanella denitrificans (strain OS217 / ATCC BAA-1090 / DSM 15013).